We begin with the raw amino-acid sequence, 296 residues long: uncharacterized protein (296 aa).

A signal peptide spans Met-1 to Ala-20.

This is an uncharacterized protein from Escherichia coli (strain K12).